A 283-amino-acid polypeptide reads, in one-letter code: Phosphatidylserine decarboxylase proenzyme (283 aa).

Residues aspartate 88, histidine 145, and serine 248 each act as charge relay system; for autoendoproteolytic cleavage activity in the active site. Serine 248 acts as the Schiff-base intermediate with substrate; via pyruvic acid; for decarboxylase activity in catalysis. Serine 248 is modified (pyruvic acid (Ser); by autocatalysis).

The protein belongs to the phosphatidylserine decarboxylase family. PSD-B subfamily. Prokaryotic type I sub-subfamily. As to quaternary structure, heterodimer of a large membrane-associated beta subunit and a small pyruvoyl-containing alpha subunit. It depends on pyruvate as a cofactor. Post-translationally, is synthesized initially as an inactive proenzyme. Formation of the active enzyme involves a self-maturation process in which the active site pyruvoyl group is generated from an internal serine residue via an autocatalytic post-translational modification. Two non-identical subunits are generated from the proenzyme in this reaction, and the pyruvate is formed at the N-terminus of the alpha chain, which is derived from the carboxyl end of the proenzyme. The autoendoproteolytic cleavage occurs by a canonical serine protease mechanism, in which the side chain hydroxyl group of the serine supplies its oxygen atom to form the C-terminus of the beta chain, while the remainder of the serine residue undergoes an oxidative deamination to produce ammonia and the pyruvoyl prosthetic group on the alpha chain. During this reaction, the Ser that is part of the protease active site of the proenzyme becomes the pyruvoyl prosthetic group, which constitutes an essential element of the active site of the mature decarboxylase.

It localises to the cell membrane. The enzyme catalyses a 1,2-diacyl-sn-glycero-3-phospho-L-serine + H(+) = a 1,2-diacyl-sn-glycero-3-phosphoethanolamine + CO2. It participates in phospholipid metabolism; phosphatidylethanolamine biosynthesis; phosphatidylethanolamine from CDP-diacylglycerol: step 2/2. In terms of biological role, catalyzes the formation of phosphatidylethanolamine (PtdEtn) from phosphatidylserine (PtdSer). This Variovorax paradoxus (strain S110) protein is Phosphatidylserine decarboxylase proenzyme.